The following is a 490-amino-acid chain: Bifunctional pantoate ligase/cytidylate kinase (490 aa).

1–8 (MGGLHQGH) contributes to the ATP binding site. A pantoate--beta-alanine ligase region spans residues 1–253 (MGGLHQGHAR…CGETRLIDHV (253 aa)). Histidine 8 (proton donor) is an active-site residue. Glutamine 35 is a binding site for (R)-pantoate. Glutamine 35 contacts beta-alanine. Position 124–127 (124–127 (GEKD)) interacts with ATP. Glutamine 130 is a (R)-pantoate binding site. ATP is bound by residues valine 153 and 161–164 (ASSR). The cytidylate kinase stretch occupies residues 254–490 (FIMTRSPIVA…AKEIWPTPQG (237 aa)).

The protein in the N-terminal section; belongs to the pantothenate synthetase family. This sequence in the C-terminal section; belongs to the cytidylate kinase family. Type 1 subfamily.

The protein localises to the cytoplasm. It carries out the reaction (R)-pantoate + beta-alanine + ATP = (R)-pantothenate + AMP + diphosphate + H(+). The catalysed reaction is CMP + ATP = CDP + ADP. The enzyme catalyses dCMP + ATP = dCDP + ADP. It functions in the pathway cofactor biosynthesis; (R)-pantothenate biosynthesis; (R)-pantothenate from (R)-pantoate and beta-alanine: step 1/1. Catalyzes the condensation of pantoate with beta-alanine in an ATP-dependent reaction via a pantoyl-adenylate intermediate. Functionally, catalyzes the transfer of a phosphate group from ATP to either CMP or dCMP to form CDP or dCDP and ADP, respectively. This chain is Bifunctional pantoate ligase/cytidylate kinase, found in Synechococcus sp. (strain WH7803).